A 1171-amino-acid polypeptide reads, in one-letter code: DNA-directed RNA polymerase subunit beta (1171 aa).

It belongs to the RNA polymerase beta chain family. The RNAP catalytic core consists of 2 alpha, 1 beta, 1 beta' and 1 omega subunit. When a sigma factor is associated with the core the holoenzyme is formed, which can initiate transcription.

It carries out the reaction RNA(n) + a ribonucleoside 5'-triphosphate = RNA(n+1) + diphosphate. DNA-dependent RNA polymerase catalyzes the transcription of DNA into RNA using the four ribonucleoside triphosphates as substrates. This chain is DNA-directed RNA polymerase subunit beta, found in Arthrobacter sp. (strain FB24).